We begin with the raw amino-acid sequence, 639 residues long: DNA primase (639 aa).

A CHC2-type zinc finger spans residues 41 to 65; sequence CPFHNEKSPSFHVRPNHGHFHCFGC. The Toprim domain occupies 262-348; that stretch reads HQAVVVEGYT…AGQSFVAVAP (87 aa). Residues glutamate 268, aspartate 319, and aspartate 321 each coordinate Mg(2+). Residues 460–479 are disordered; the sequence is RAAQRPTAGPPTELAVRPDP.

It belongs to the DnaG primase family. In terms of assembly, monomer. Interacts with DnaB. Zn(2+) serves as cofactor. It depends on Mg(2+) as a cofactor.

It catalyses the reaction ssDNA + n NTP = ssDNA/pppN(pN)n-1 hybrid + (n-1) diphosphate.. Its function is as follows. RNA polymerase that catalyzes the synthesis of short RNA molecules used as primers for DNA polymerase during DNA replication. In Mycobacterium bovis (strain ATCC BAA-935 / AF2122/97), this protein is DNA primase.